We begin with the raw amino-acid sequence, 411 residues long: LL-diaminopimelate aminotransferase (411 aa).

Substrate is bound by residues Tyr15 and Gly42. Pyridoxal 5'-phosphate is bound by residues Tyr72, 108-109 (SK), Tyr132, Asn187, Tyr218, and 246-248 (SFS). The substrate site is built by Lys109, Tyr132, and Asn187. Lys249 is subject to N6-(pyridoxal phosphate)lysine. Residues Arg257 and Asn292 each coordinate pyridoxal 5'-phosphate. Positions 292 and 388 each coordinate substrate.

It belongs to the class-I pyridoxal-phosphate-dependent aminotransferase family. LL-diaminopimelate aminotransferase subfamily. As to quaternary structure, homodimer. Requires pyridoxal 5'-phosphate as cofactor.

The enzyme catalyses (2S,6S)-2,6-diaminopimelate + 2-oxoglutarate = (S)-2,3,4,5-tetrahydrodipicolinate + L-glutamate + H2O + H(+). It functions in the pathway amino-acid biosynthesis; L-lysine biosynthesis via DAP pathway; LL-2,6-diaminopimelate from (S)-tetrahydrodipicolinate (aminotransferase route): step 1/1. Functionally, involved in the synthesis of meso-diaminopimelate (m-DAP or DL-DAP), required for both lysine and peptidoglycan biosynthesis. Catalyzes the direct conversion of tetrahydrodipicolinate to LL-diaminopimelate. The protein is LL-diaminopimelate aminotransferase of Trichodesmium erythraeum (strain IMS101).